We begin with the raw amino-acid sequence, 245 residues long: 5'-nucleotidase SurE (245 aa).

The a divalent metal cation site is built by Asp-8, Asp-9, Ser-39, and Asn-91.

The protein belongs to the SurE nucleotidase family. The cofactor is a divalent metal cation.

It is found in the cytoplasm. It catalyses the reaction a ribonucleoside 5'-phosphate + H2O = a ribonucleoside + phosphate. Functionally, nucleotidase that shows phosphatase activity on nucleoside 5'-monophosphates. This is 5'-nucleotidase SurE from Herminiimonas arsenicoxydans.